The primary structure comprises 346 residues: Dimethyladenosine transferase 1, mitochondrial (346 aa).

A mitochondrion-targeting transit peptide spans 1 to 27 (MAASGKLSTCRLPPLPTIREIIKLLRL). Positions 38, 63, 85, 86, 111, 112, and 141 each coordinate S-adenosyl-L-methionine.

The protein belongs to the class I-like SAM-binding methyltransferase superfamily. rRNA adenine N(6)-methyltransferase family. KsgA subfamily. In terms of assembly, interacts with mitochondrial RNA polymerase POLRMT. Interacts with TFAM. Bound to the maturing mtSSU until the late stages of assembly. In terms of tissue distribution, ubiquitously expressed.

It localises to the mitochondrion. The catalysed reaction is adenosine(N)/adenosine(N+1) in rRNA + 4 S-adenosyl-L-methionine = N(6)-dimethyladenosine(N)/N(6)-dimethyladenosine(N+1) in rRNA + 4 S-adenosyl-L-homocysteine + 4 H(+). Functionally, mitochondrial methyltransferase which uses S-adenosyl methionine to dimethylate two highly conserved adjacent adenosine residues (A1583 and A1584) within the loop of helix 45 at the 3-prime end of 12S rRNA, thereby regulating the assembly or stability of the small subunit of the mitochondrial ribosome. Also required for basal transcription of mitochondrial DNA, probably via its interaction with POLRMT and TFAM. Stimulates transcription independently of the methyltransferase activity. This is Dimethyladenosine transferase 1, mitochondrial from Homo sapiens (Human).